The primary structure comprises 1111 residues: Protein STU1 (1111 aa).

HEAT repeat units follow at residues 95–133 and 167–205; these read ALPL…ERSV and YVPT…KSDL. Disordered stretches follow at residues 225-245 and 476-751; these read ELNP…VEPS and RLLQ…VDEE. The span at 502–511 shows a compositional bias: polar residues; the sequence is SKSTMGTSKP. The segment covering 704–714 has biased composition (basic and acidic residues); that stretch reads PREEQRFVKPV.

This sequence belongs to the CLASP family. As to quaternary structure, interacts with microtubules.

Its subcellular location is the cytoplasm. It is found in the cytoskeleton. The protein resides in the nucleus. The protein localises to the spindle. In terms of biological role, microtubule binding protein that promotes the stabilization of dynamic microtubules. Required for mitotic spindle formation. This is Protein STU1 (STU1) from Chaetomium globosum (strain ATCC 6205 / CBS 148.51 / DSM 1962 / NBRC 6347 / NRRL 1970) (Soil fungus).